The primary structure comprises 1026 residues: Isoleucine--tRNA ligase (1026 aa).

Residues 51–61 carry the 'HIGH' region motif; the sequence is PTANGRPHIGH. Residues 591–595 carry the 'KMSKS' region motif; the sequence is KMSKS. Lysine 594 is a binding site for ATP.

The protein belongs to the class-I aminoacyl-tRNA synthetase family. IleS type 2 subfamily. Monomer. Requires Zn(2+) as cofactor.

The protein resides in the cytoplasm. The enzyme catalyses tRNA(Ile) + L-isoleucine + ATP = L-isoleucyl-tRNA(Ile) + AMP + diphosphate. In terms of biological role, catalyzes the attachment of isoleucine to tRNA(Ile). As IleRS can inadvertently accommodate and process structurally similar amino acids such as valine, to avoid such errors it has two additional distinct tRNA(Ile)-dependent editing activities. One activity is designated as 'pretransfer' editing and involves the hydrolysis of activated Val-AMP. The other activity is designated 'posttransfer' editing and involves deacylation of mischarged Val-tRNA(Ile). This Thermoplasma acidophilum (strain ATCC 25905 / DSM 1728 / JCM 9062 / NBRC 15155 / AMRC-C165) protein is Isoleucine--tRNA ligase.